Consider the following 445-residue polypeptide: Rab GDP dissociation inhibitor beta (445 aa).

N-acetylmethionine is present on Met1. An N6-succinyllysine modification is found at Lys57. At Lys112 the chain carries N6-acetyllysine. Ser130 is modified (phosphoserine). An N6-acetyllysine modification is found at Lys269. Ser382 is subject to Phosphoserine.

It belongs to the Rab GDI family. As to quaternary structure, interacts with RHOH. Interacts with the GDP-bound inactive forms of RAB3A, RAB3B, RAB3C, RAB5A, RAB5B, RAB5C, RAB8A, RAB8B, RAB10, RAB12, RAB35, and RAB43; binds RAB3D to a lesser extent. Interacts with DZIP1; this interaction negatively regulates the interaction of GDI2 with GDP-bound RAB8A.

Its subcellular location is the cytoplasm. The protein localises to the membrane. It localises to the golgi apparatus. The protein resides in the trans-Golgi network. In terms of biological role, GDP-dissociation inhibitor preventing the GDP to GTP exchange of most Rab proteins. By keeping these small GTPases in their inactive GDP-bound form regulates intracellular membrane trafficking. Negatively regulates protein transport to the cilium and ciliogenesis through the inhibition of RAB8A. This Pongo abelii (Sumatran orangutan) protein is Rab GDP dissociation inhibitor beta (GDI2).